The chain runs to 501 residues: L-arabinose isomerase (501 aa).

Mn(2+) contacts are provided by Glu307, Glu334, His351, and His450.

Belongs to the arabinose isomerase family. It depends on Mn(2+) as a cofactor.

It carries out the reaction beta-L-arabinopyranose = L-ribulose. It functions in the pathway carbohydrate degradation; L-arabinose degradation via L-ribulose; D-xylulose 5-phosphate from L-arabinose (bacterial route): step 1/3. In terms of biological role, catalyzes the conversion of L-arabinose to L-ribulose. The chain is L-arabinose isomerase from Acidothermus cellulolyticus (strain ATCC 43068 / DSM 8971 / 11B).